A 794-amino-acid chain; its full sequence is Kinesin-like protein KIN-13A (794 aa).

A Kinesin motor domain is found at 193 to 526 (KIKVVVRKRP…LRYADRVKSL (334 aa)). 282 to 289 (GQTGSGKT) provides a ligand contact to ATP. Residues 525–699 (SLSKSGNSKK…YETASRQYET (175 aa)) form a disordered region. Residues 569–579 (ETRRRVVEKDS) show a composition bias toward basic and acidic residues. 2 stretches are compositionally biased toward polar residues: residues 580–593 (NSSTSGIDFRQPTN) and 611–632 (EPNSSFAGSTSQRNNISSYPQE). The segment covering 650–668 (GLREEKPDRPQNWSKRDVS) has biased composition (basic and acidic residues). The span at 669-696 (SSDIPTLTNFRQNASETASRQYETASRQ) shows a compositional bias: polar residues. Positions 705-742 (ENLDALLEEEEALIAAHRKEIEDTMEIVREEMKLLAEV) form a coiled coil.

It belongs to the TRAFAC class myosin-kinesin ATPase superfamily. Kinesin family. KIN-13 subfamily. As to quaternary structure, component of the active ARAC10-IRC5-KIN13A complex. Interacts (via-C-terminus) with ICR2 and ICR5 (via N-terminus). No interactions with ICR1. Expressed in leaves, roots, young and mature seedlings. Preferentially expressed in the secondary cell wall pits of differentiating metaxylem vessel cells (at the protein level).

The protein localises to the golgi apparatus. It is found in the golgi stack. It localises to the cytoplasm. Its subcellular location is the cytoskeleton. Functionally, internal motor kinesin involved in trichome morphogenesis. Participates in regulating the formation of Golgi-associated vesicles. Plays a central role in microtubule disassembly via the active ARAC10-ICR5 cascade, which establishes the secondary cell wall pattern in metaxylem vessel cells. Acts redundantly with KIN13B to modulate cell wall synthesis and cell expansion via the THE1 pathway. This chain is Kinesin-like protein KIN-13A, found in Arabidopsis thaliana (Mouse-ear cress).